The primary structure comprises 801 residues: Leucine--tRNA ligase (801 aa).

The short motif at 40–51 (PYPSGAGLHVGH) is the 'HIGH' region element. Residues 576–580 (KMSKS) carry the 'KMSKS' region motif. ATP is bound at residue lysine 579.

Belongs to the class-I aminoacyl-tRNA synthetase family.

It localises to the cytoplasm. The catalysed reaction is tRNA(Leu) + L-leucine + ATP = L-leucyl-tRNA(Leu) + AMP + diphosphate. The polypeptide is Leucine--tRNA ligase (Exiguobacterium sibiricum (strain DSM 17290 / CCUG 55495 / CIP 109462 / JCM 13490 / 255-15)).